The sequence spans 429 residues: Histidine--tRNA ligase (429 aa).

Belongs to the class-II aminoacyl-tRNA synthetase family. Homodimer.

The protein resides in the cytoplasm. It catalyses the reaction tRNA(His) + L-histidine + ATP = L-histidyl-tRNA(His) + AMP + diphosphate + H(+). The chain is Histidine--tRNA ligase from Streptococcus pneumoniae serotype 19F (strain G54).